We begin with the raw amino-acid sequence, 186 residues long: Mediator of RNA polymerase II transcription subunit 29 (186 aa).

Polar residues predominate over residues Met1–Gln12. A disordered region spans residues Met1 to Gln41. The span at Gly25 to Gln41 shows a compositional bias: low complexity.

The protein belongs to the Mediator complex subunit 29 family. Component of the Mediator complex.

It is found in the nucleus. Its function is as follows. Component of the Mediator complex, a coactivator involved in the regulated transcription of nearly all RNA polymerase II-dependent genes. Mediator functions as a bridge to convey information from gene-specific regulatory proteins to the basal RNA polymerase II transcription machinery. Mediator is recruited to promoters by direct interactions with regulatory proteins and serves as a scaffold for the assembly of a functional preinitiation complex with RNA polymerase II and the general transcription factors. The chain is Mediator of RNA polymerase II transcription subunit 29 (med29) from Xenopus laevis (African clawed frog).